The following is a 408-amino-acid chain: MTFHTLNELIADGVRGRYILVRSDLNVPLDGSEVTDDGRIKASLPVLTKLTDAGARVLVTAHLGRPKGAPEEKYSLKPAATRLAELAPFQVTLAGDTVGASAKEHAAALQDGEVLVLENVRFDARETSKDDAERGAFADELVSLTGENGAFVDDAFGAVHRKHASVYDVATRLPSYQGDLVHTEVEVLRKLTTETQRPYVVVLGGSKVSDKLAVIDNLIGKADTILVGGGMLFTFLAADGHKVAGSLLEEDQIPVVQDYLKRAADAGTEFVVPTDVVVAAKFAADADHETVRADAIEGSSFGAQGIGLDIGPESAAEFANRIKGAKTVFWNGPMGVFEFDAFAGGTRAIALALTEADAFTVVGGGDSAAAVRTLGFADDQFGHISTGGGASLEYLEGKELPGLSVLDR.

Substrate is bound by residues 24-26 (DLN), Arg-39, 62-65 (HLGR), Arg-121, and Arg-161. Residues Lys-211, Gly-307, Glu-338, and 364–367 (GGDS) contribute to the ATP site.

It belongs to the phosphoglycerate kinase family. In terms of assembly, monomer.

It localises to the cytoplasm. It catalyses the reaction (2R)-3-phosphoglycerate + ATP = (2R)-3-phospho-glyceroyl phosphate + ADP. Its pathway is carbohydrate degradation; glycolysis; pyruvate from D-glyceraldehyde 3-phosphate: step 2/5. The chain is Phosphoglycerate kinase from Arthrobacter sp. (strain FB24).